The primary structure comprises 223 residues: MIPQTLEQLLSQAQSIAGLTFGELADELHIPVPIDLKRDKGWVGMLLERALGATAGSKAEQDFSHLGVELKTLPINAEGYPLETTFVSLAPLVQNSGVKWENSHVRHKLSCVLWMPIEGSRHIPLRERHIGAPIFWKPTAEQERQLKQDWEELMDLIVLGKLDQITARIGEVMQLRPKGANSRAVTKGIGKNGEIIDTLPLGFYLRKEFTAQILNAFLETKSL.

This sequence belongs to the MutH family.

The protein localises to the cytoplasm. Its function is as follows. Sequence-specific endonuclease that cleaves unmethylated GATC sequences. It is involved in DNA mismatch repair. The sequence is that of DNA mismatch repair protein MutH from Haemophilus influenzae (strain ATCC 51907 / DSM 11121 / KW20 / Rd).